The primary structure comprises 665 residues: Translation factor GUF1 homolog, mitochondrial (665 aa).

The transit peptide at 1-35 (MAGAAVLRRSARRIYRHLAAAPAFSRSVLQQPKRL) directs the protein to the mitochondrion. Residues 34 to 53 (RLLSSQSSPEHGARGAVSGS) are disordered. The tr-type G domain occupies 61–249 (ERVRNFSIIA…AVIERIPSPP (189 aa)). GTP contacts are provided by residues 70-77 (AHVDHGKS), 142-146 (DTPGH), and 196-199 (NKID).

The protein belongs to the TRAFAC class translation factor GTPase superfamily. Classic translation factor GTPase family. LepA subfamily.

It is found in the mitochondrion inner membrane. The catalysed reaction is GTP + H2O = GDP + phosphate + H(+). In terms of biological role, promotes mitochondrial protein synthesis. May act as a fidelity factor of the translation reaction, by catalyzing a one-codon backward translocation of tRNAs on improperly translocated ribosomes. Binds to mitochondrial ribosomes in a GTP-dependent manner. This chain is Translation factor GUF1 homolog, mitochondrial, found in Sorghum bicolor (Sorghum).